The chain runs to 492 residues: Sestrin-3 (492 aa).

The interval 62–243 (LVEEYSTSGR…VCDLANDNSI (182 aa)) is N-terminal domain; may mediate the alkylhydroperoxide reductase activity. The active-site Cysteine sulfenic acid (-SOH) intermediate is cysteine 121. The interval 310-492 (PHSDFEDDVI…ALRAITRHLT (183 aa)) is C-terminal domain; mediates TORC1 regulation. Residues 386–389 (TYNT), threonine 398, and glutamate 463 each bind L-leucine.

This sequence belongs to the sestrin family. As to quaternary structure, interacts with the GATOR2 complex which is composed of MIOS, SEC13, SEH1L, WDR24 and WDR59; the interaction is not regulated by leucine. Interacts with RRAGA, RRAGB, RRAGC and RRAGD; may function as a guanine nucleotide dissociation inhibitor for RRAGs and regulate them. Interacts with the TORC2 complex; through RICTOR. As to expression, detected in liver and skeletal muscles.

It is found in the cytoplasm. It catalyses the reaction a hydroperoxide + L-cysteinyl-[protein] = S-hydroxy-L-cysteinyl-[protein] + an alcohol. In terms of biological role, may function as an intracellular leucine sensor that negatively regulates the TORC1 signaling pathway. May also regulate the insulin-receptor signaling pathway through activation of TORC2. This metabolic regulator may also play a role in protection against oxidative and genotoxic stresses. May prevent the accumulation of reactive oxygen species (ROS) through the alkylhydroperoxide reductase activity born by the N-terminal domain of the protein. This chain is Sestrin-3, found in Mus musculus (Mouse).